Here is a 472-residue protein sequence, read N- to C-terminus: Siroheme synthase (472 aa).

The precorrin-2 dehydrogenase /sirohydrochlorin ferrochelatase stretch occupies residues Met-1–Leu-203. NAD(+) contacts are provided by residues Asp-22–Ile-23 and Lys-43–Ser-44. A Phosphoserine modification is found at Ser-128. The uroporphyrinogen-III C-methyltransferase stretch occupies residues Gly-216–Gly-472. Position 225 (Pro-225) interacts with S-adenosyl-L-methionine. Asp-248 functions as the Proton acceptor in the catalytic mechanism. Catalysis depends on Lys-270, which acts as the Proton donor. S-adenosyl-L-methionine-binding positions include Gly-301 to Asp-303, Ile-306, Thr-331 to Ala-332, Met-383, and Gly-412.

The protein in the N-terminal section; belongs to the precorrin-2 dehydrogenase / sirohydrochlorin ferrochelatase family. This sequence in the C-terminal section; belongs to the precorrin methyltransferase family.

The catalysed reaction is uroporphyrinogen III + 2 S-adenosyl-L-methionine = precorrin-2 + 2 S-adenosyl-L-homocysteine + H(+). It catalyses the reaction precorrin-2 + NAD(+) = sirohydrochlorin + NADH + 2 H(+). It carries out the reaction siroheme + 2 H(+) = sirohydrochlorin + Fe(2+). It participates in cofactor biosynthesis; adenosylcobalamin biosynthesis; precorrin-2 from uroporphyrinogen III: step 1/1. Its pathway is cofactor biosynthesis; adenosylcobalamin biosynthesis; sirohydrochlorin from precorrin-2: step 1/1. It functions in the pathway porphyrin-containing compound metabolism; siroheme biosynthesis; precorrin-2 from uroporphyrinogen III: step 1/1. The protein operates within porphyrin-containing compound metabolism; siroheme biosynthesis; siroheme from sirohydrochlorin: step 1/1. It participates in porphyrin-containing compound metabolism; siroheme biosynthesis; sirohydrochlorin from precorrin-2: step 1/1. Its function is as follows. Multifunctional enzyme that catalyzes the SAM-dependent methylations of uroporphyrinogen III at position C-2 and C-7 to form precorrin-2 via precorrin-1. Then it catalyzes the NAD-dependent ring dehydrogenation of precorrin-2 to yield sirohydrochlorin. Finally, it catalyzes the ferrochelation of sirohydrochlorin to yield siroheme. This Ruthia magnifica subsp. Calyptogena magnifica protein is Siroheme synthase.